The following is a 164-amino-acid chain: 6,7-dimethyl-8-ribityllumazine synthase (164 aa).

5-amino-6-(D-ribitylamino)uracil-binding positions include F28, 62 to 64 (ALE), and 86 to 88 (AVI). Residue 91–92 (ET) participates in (2S)-2-hydroxy-3-oxobutyl phosphate binding. Catalysis depends on H94, which acts as the Proton donor. Position 119 (N119) interacts with 5-amino-6-(D-ribitylamino)uracil. (2S)-2-hydroxy-3-oxobutyl phosphate is bound at residue R133.

Belongs to the DMRL synthase family.

It catalyses the reaction (2S)-2-hydroxy-3-oxobutyl phosphate + 5-amino-6-(D-ribitylamino)uracil = 6,7-dimethyl-8-(1-D-ribityl)lumazine + phosphate + 2 H2O + H(+). The protein operates within cofactor biosynthesis; riboflavin biosynthesis; riboflavin from 2-hydroxy-3-oxobutyl phosphate and 5-amino-6-(D-ribitylamino)uracil: step 1/2. In terms of biological role, catalyzes the formation of 6,7-dimethyl-8-ribityllumazine by condensation of 5-amino-6-(D-ribitylamino)uracil with 3,4-dihydroxy-2-butanone 4-phosphate. This is the penultimate step in the biosynthesis of riboflavin. This is 6,7-dimethyl-8-ribityllumazine synthase from Nitrosomonas europaea (strain ATCC 19718 / CIP 103999 / KCTC 2705 / NBRC 14298).